Reading from the N-terminus, the 371-residue chain is Cytochrome b (371 aa).

Helical transmembrane passes span 25 to 45 (FGSM…FLAI), 69 to 90 (WIMQ…YTHI), 105 to 125 (WLSG…GYVL), and 170 to 190 (FFAL…IHII). Residues histidine 75 and histidine 89 each contribute to the heme b site. 2 residues coordinate heme b: histidine 174 and histidine 188. Histidine 193 serves as a coordination point for a ubiquinone. The next 4 helical transmembrane spans lie at 218 to 238 (YKDT…LSFT), 280 to 300 (LGGT…PFTH), 312 to 332 (LAQT…WTAS), and 339 to 358 (FIII…IMNP).

It belongs to the cytochrome b family. The cytochrome bc1 complex contains 3 respiratory subunits (MT-CYB, CYC1 and UQCRFS1), 2 core proteins (UQCRC1 and UQCRC2) and probably 6 low-molecular weight proteins. It depends on heme b as a cofactor.

The protein localises to the mitochondrion inner membrane. Functionally, component of the ubiquinol-cytochrome c reductase complex (complex III or cytochrome b-c1 complex) that is part of the mitochondrial respiratory chain. The b-c1 complex mediates electron transfer from ubiquinol to cytochrome c. Contributes to the generation of a proton gradient across the mitochondrial membrane that is then used for ATP synthesis. The polypeptide is Cytochrome b (MT-CYB) (Sinomicrurus macclellandi (Macclelland's coral snake)).